The primary structure comprises 1002 residues: Inversin-B (1002 aa).

16 ANK repeats span residues 9-39 (SLAS…VIDQ), 43-72 (LGRT…KVNR), 76-105 (SGRT…DCTH), 109-140 (CDIT…QVDA), 144-173 (RKQT…NIGI), 177-209 (EGKI…TESL), 216-246 (EGRT…NVAP), 250-279 (LFRT…SPNI), 284-313 (QGAT…VRDE), 317-346 (EGRT…KLEV), 352-381 (YGGT…QADA), 385-414 (MKHT…KVHL), 418-447 (DGRS…NPDA), 451-480 (EGRT…DPNI), 484-513 (NGRT…FPNQ), and 519-549 (ERYT…SIAA). The D-box 1 signature appears at 486-494 (RTALHWSCN). The IQ 1 domain occupies 551–580 (QDIAAFKIQAVYKGHKVRRAFQERKNLLMK). 3 stretches are compositionally biased toward basic and acidic residues: residues 586-599 (KGAA…ENRQ), 609-621 (KQKD…RQNK), and 643-656 (AEDR…ENLE). 2 disordered regions span residues 586–804 (KGAA…KGRR) and 862–886 (SAKT…SSSA). Polar residues-rich tracts occupy residues 670-680 (QRITAQIQSSP) and 687-706 (NSIQ…SSPL). Composition is skewed to basic and acidic residues over residues 733–763 (HQME…EERK) and 770–796 (QSSD…EGKK). Positions 959–967 (RKQLFQRKN) match the D-box 2 motif. An IQ 2 domain is found at 966–995 (KNHAATVIQKAWRTYWVRKSSCKTRHSRSQ).

As to quaternary structure, interacts with apc2. Binds calmodulin.

It is found in the cytoplasm. It localises to the cytoskeleton. In terms of biological role, required for normal renal development and establishment of left-right axis. Probably acts as a molecular switch between different Wnt signaling pathways. Inhibits the canonical Wnt pathway by targeting cytoplasmic disheveled for degradation by the ubiquitin-proteasome. This suggests that it is required in renal development to oppose the repression of terminal differentiation of tubular epithelial cells by Wnt signaling. Plays a central role in convergent extension movements in gastrulating embryos, a processus regulated by Wnt signaling. This Xenopus laevis (African clawed frog) protein is Inversin-B (invs-b).